The sequence spans 598 residues: MANKKEYVVGIDLGTTNSVIAWMKPDSSVEVIPNAEGARTTPSIVAFSKTGEILVGEPAKRQLILNSERTIKSIKRKMGTDYKVKIDDKDYTPQEISAFILKKLKRDAEEYLGGEVKKAVITCPAYFNDAQRQATKEAGIIAGFEVLRIINEPTAAALAYGLDKKGKEEKVLVYDLGGGTFDVSILEIGDGVIQVVATSGNNHLGGDDFDQRIIDWLAEEFKKQHGVDLREDKQALQRLRDAAEKAKIELSSKLETDISLPYITATAEGPLHLEMRLTRSMFESLTRDLVEMTRKPVEQALSDAKLKPEDIDEIILVGGMTRVPMVQKFIKEIFGKDPNRGVNPDEAVAVGAAIQAAILAGEEGAQGKDIVLVDVTPLTLGIEVKGGLFEPIIPRNSTIPIKKSKVFTTAEDGQTEVEVRVYQGERPIAADNILLGSFRLVGIPPAPRGVPQIEVTFDIDSDGIVHVSAKDLGTGKEQSMVVSGRHQLSEDDINKIIEDAKKFEEQDKRRKEEVELKNKADDLAYYIEKSLKEYGDKIPADEKDKLENLVKDLRDAINKNDIPRIKMLFDELDREKTKIGEYIYKQNQQGGNQQAENQ.

At Thr-180 the chain carries Phosphothreonine; by autocatalysis.

This sequence belongs to the heat shock protein 70 family.

Its function is as follows. Acts as a chaperone. This chain is Chaperone protein DnaK, found in Thermosipho africanus (strain TCF52B).